The sequence spans 98 residues: MSLTYMNMFMAFTISLLGLLMYRSHMMSSLLCLEGMMLSLFVMMTMTILNTHLTLASMLPIILLVFAACEAALGLSLLVMVSTTYGMDYVQNLNLLQC.

Helical transmembrane passes span 1 to 21 (MSLT…GLLM), 29 to 49 (SLLC…MTIL), and 61 to 81 (IILL…LVMV).

This sequence belongs to the complex I subunit 4L family. In terms of assembly, core subunit of respiratory chain NADH dehydrogenase (Complex I) which is composed of 45 different subunits.

It localises to the mitochondrion inner membrane. The catalysed reaction is a ubiquinone + NADH + 5 H(+)(in) = a ubiquinol + NAD(+) + 4 H(+)(out). Functionally, core subunit of the mitochondrial membrane respiratory chain NADH dehydrogenase (Complex I) which catalyzes electron transfer from NADH through the respiratory chain, using ubiquinone as an electron acceptor. Part of the enzyme membrane arm which is embedded in the lipid bilayer and involved in proton translocation. The polypeptide is NADH-ubiquinone oxidoreductase chain 4L (MT-ND4L) (Stenoderma rufum (Red fruit bat)).